Reading from the N-terminus, the 317-residue chain is HTH-type transcriptional regulator CfxR (317 aa).

Positions 8 to 65 constitute an HTH lysR-type domain; sequence LTLRQLQIFVTVARHASFVRAAEELHLTQPAVSMQVKQLESVVGMALFERVKGQLTLT. The H-T-H motif DNA-binding region spans 25–44; that stretch reads FVRAAEELHLTQPAVSMQVK.

Belongs to the LysR transcriptional regulatory family.

Its function is as follows. Trans-acting transcriptional regulator of RuBisCO genes (cfxLS) expression. This chain is HTH-type transcriptional regulator CfxR (cfxR), found in Cupriavidus necator (strain ATCC 17699 / DSM 428 / KCTC 22496 / NCIMB 10442 / H16 / Stanier 337) (Ralstonia eutropha).